A 145-amino-acid polypeptide reads, in one-letter code: Basic phospholipase A2 PC10 (145 aa).

The N-terminal stretch at 1–21 is a signal peptide; the sequence is MYPAHLLLLLAVCVSLLGASA. Positions 22-27 are excised as a propeptide; that stretch reads IPPLPL. Cystine bridges form between cysteine 38/cysteine 98, cysteine 54/cysteine 144, cysteine 56/cysteine 72, cysteine 71/cysteine 125, cysteine 78/cysteine 118, cysteine 87/cysteine 111, and cysteine 105/cysteine 116. 3 residues coordinate Ca(2+): tyrosine 55, glycine 57, and glycine 59. Residue histidine 75 is part of the active site. Aspartate 76 contacts Ca(2+). The active site involves aspartate 119.

The protein belongs to the phospholipase A2 family. Group I subfamily. D49 sub-subfamily. It depends on Ca(2+) as a cofactor.

The protein localises to the secreted. It catalyses the reaction a 1,2-diacyl-sn-glycero-3-phosphocholine + H2O = a 1-acyl-sn-glycero-3-phosphocholine + a fatty acid + H(+). Functionally, PLA2 catalyzes the calcium-dependent hydrolysis of the 2-acyl groups in 3-sn-phosphoglycerides. The sequence is that of Basic phospholipase A2 PC10 from Laticauda laticaudata (Blue-ringed sea krait).